A 221-amino-acid chain; its full sequence is Ras-related protein Rab-27A (221 aa).

Serine 2 carries the N-acetylserine modification. A Phosphoserine modification is found at serine 2. GTP is bound at residue 16-24 (GDSGVGKTS). The short motif at 38-46 (FITTVGIDF) is the Effector region element. Residues 74-78 (DTAGQ), 133-136 (NKSD), and 163-165 (SAA) contribute to the GTP site. Cysteine 123 and cysteine 188 are oxidised to a cystine. 2 S-geranylgeranyl cysteine lipidation sites follow: cysteine 219 and cysteine 221. Cysteine methyl ester is present on cysteine 221.

This sequence belongs to the small GTPase superfamily. Rab family. Binds SYTL1, SLAC2B, MYRIP, SYTL3, SYTL4 and SYTL5. Interacts with RPH3A and RPH3A. Binds MLPH and SYTL2. Interacts with UNC13D. Does not interact with the BLOC-3 complex (heterodimer of HPS1 and HPS4). Interacts (GDP-bound form preferentially) with DENND10.

It is found in the membrane. It localises to the melanosome. Its subcellular location is the late endosome. The protein localises to the lysosome. It catalyses the reaction GTP + H2O = GDP + phosphate + H(+). Its activity is regulated as follows. Regulated by guanine nucleotide exchange factors (GEFs) which promote the exchange of bound GDP for free GTP, GTPase activating proteins (GAPs) which increase the GTP hydrolysis activity, and GDP dissociation inhibitors which inhibit the dissociation of the nucleotide from the GTPase. Activated by GEFs such as DENND10. Small GTPase which cycles between active GTP-bound and inactive GDP-bound states. In its active state, binds to a variety of effector proteins to regulate homeostasis of late endocytic pathway, including endosomal positioning, maturation and secretion. Plays a role in cytotoxic granule exocytosis in lymphocytes. Required for both granule maturation and granule docking and priming at the immunologic synapse. The protein is Ras-related protein Rab-27A (RAB27A) of Canis lupus familiaris (Dog).